The following is a 224-amino-acid chain: Vesicle transport through interaction with t-SNAREs homolog 1A (224 aa).

At 1–199 the chain is on the cytoplasmic side; the sequence is MSADFEGYEQ…GMLRRIIQNR (199 aa). Coiled-coil stretches lie at residues 31–92 and 106–185; these read PDEK…KRSR and DAGN…GKSS. Residues 200-220 form a helical; Anchor for type IV membrane protein membrane-spanning segment; that stretch reads ILLVILGIIVVITILTAITFF. Over 221–224 the chain is Vesicular; sequence VRGH.

It belongs to the VTI1 family. As to quaternary structure, interacts with distinct SNARE complexes that contain either STX5 or STX6. Interacts with NAPA and, to a lesser extent, with NAPG. Identified in a complex containing STX6, STX12, VAMP4 and VTI1A. Specifically expressed in the neuronal tissues cerebellum, cortex and hippocampus. Isoform 1/VTI1A is expressed in the same neuronal tissues but also in lung, liver, kidney and spleen.

The protein localises to the membrane. It is found in the cytoplasmic vesicle. It localises to the secretory vesicle. The protein resides in the synaptic vesicle membrane. Its subcellular location is the clathrin-coated vesicle membrane. The protein localises to the golgi apparatus membrane. V-SNARE that mediates vesicle transport pathways through interactions with t-SNAREs on the target membrane. These interactions are proposed to mediate aspects of the specificity of vesicle trafficking and to promote fusion of the lipid bilayers. Involved in vesicular transport from the late endosomes to the trans-Golgi network. Along with VAMP7, involved in an non-conventional RAB1-dependent traffic route to the cell surface used by KCNIP1 and KCND2. May be concerned with increased secretion of cytokines associated with cellular senescence. The polypeptide is Vesicle transport through interaction with t-SNAREs homolog 1A (Vti1a) (Rattus norvegicus (Rat)).